The sequence spans 175 residues: Ribosome maturation factor RimM (175 aa).

The 78-residue stretch at 98-175 (EGEYYWHQLE…EMRVDWDADF (78 aa)) folds into the PRC barrel domain.

This sequence belongs to the RimM family. As to quaternary structure, binds ribosomal protein uS19.

It is found in the cytoplasm. An accessory protein needed during the final step in the assembly of 30S ribosomal subunit, possibly for assembly of the head region. Essential for efficient processing of 16S rRNA. May be needed both before and after RbfA during the maturation of 16S rRNA. It has affinity for free ribosomal 30S subunits but not for 70S ribosomes. The chain is Ribosome maturation factor RimM from Pseudomonas aeruginosa (strain ATCC 15692 / DSM 22644 / CIP 104116 / JCM 14847 / LMG 12228 / 1C / PRS 101 / PAO1).